Reading from the N-terminus, the 342-residue chain is Transcription initiation factor TFIID subunit 12 (342 aa).

Residues 1–221 form a disordered region; that stretch reads MKMEEFSPPT…QAPPPQMIPA (221 aa). Residues 12 to 35 are compositionally biased toward polar residues; it reads PNNHVIVQANPQIAAALSTNSPMQ. Low complexity-rich tracts occupy residues 39 to 59, 67 to 89, 96 to 146, and 180 to 192; these read PPQG…VGQP, PMRM…QMRA, QQQQ…HLMG, and QQIM…QQHQ. The segment covering 193–218 has biased composition (pro residues); the sequence is QPPPSQQIQQPPIPQPQQQQAPPPQM. Positions 230-297 constitute a Histone-fold domain; that stretch reads EKSKLDDLMQ…EFILKNVYNM (68 aa).

It belongs to the TAF12 family. As to quaternary structure, interacts (via histone-fold domain) with taf-4 (via the histone-fold domain). Interaction may facilitate the nuclear localization of taf-4.

It is found in the nucleus. Its function is as follows. Part of the general transcription factor complex TFIID. Plays a role in recruiting taf-4 to the nucleus and thereby activating transcription initiation by RNA polymerase II, as part of the TFIID complex. The sequence is that of Transcription initiation factor TFIID subunit 12 from Caenorhabditis elegans.